The sequence spans 471 residues: UDP-N-acetylmuramate--L-alanine ligase (471 aa).

114–120 (GTHGKTT) is a binding site for ATP.

It belongs to the MurCDEF family.

It is found in the cytoplasm. It carries out the reaction UDP-N-acetyl-alpha-D-muramate + L-alanine + ATP = UDP-N-acetyl-alpha-D-muramoyl-L-alanine + ADP + phosphate + H(+). It participates in cell wall biogenesis; peptidoglycan biosynthesis. Functionally, cell wall formation. This is UDP-N-acetylmuramate--L-alanine ligase from Sinorhizobium medicae (strain WSM419) (Ensifer medicae).